The chain runs to 261 residues: Thiazole synthase (261 aa).

The active-site Schiff-base intermediate with DXP is the Lys102. Residues Gly163, 189-190 (AG), and 211-212 (NT) contribute to the 1-deoxy-D-xylulose 5-phosphate site.

The protein belongs to the ThiG family. As to quaternary structure, homotetramer. Forms heterodimers with either ThiH or ThiS.

Its subcellular location is the cytoplasm. It catalyses the reaction [ThiS sulfur-carrier protein]-C-terminal-Gly-aminoethanethioate + 2-iminoacetate + 1-deoxy-D-xylulose 5-phosphate = [ThiS sulfur-carrier protein]-C-terminal Gly-Gly + 2-[(2R,5Z)-2-carboxy-4-methylthiazol-5(2H)-ylidene]ethyl phosphate + 2 H2O + H(+). It functions in the pathway cofactor biosynthesis; thiamine diphosphate biosynthesis. Its function is as follows. Catalyzes the rearrangement of 1-deoxy-D-xylulose 5-phosphate (DXP) to produce the thiazole phosphate moiety of thiamine. Sulfur is provided by the thiocarboxylate moiety of the carrier protein ThiS. In vitro, sulfur can be provided by H(2)S. The chain is Thiazole synthase from Acinetobacter baylyi (strain ATCC 33305 / BD413 / ADP1).